The following is a 1017-amino-acid chain: Sodium/potassium-transporting ATPase subunit alpha-2 (1017 aa).

A disordered region spans residues 1-31 (MDGREYSPAATTSENGGGRRKQKEKELDELK). Topologically, residues 1–82 (MDGREYSPAA…NALTPPPTTP (82 aa)) are cytoplasmic. An interaction with phosphoinositide-3 kinase region spans residues 77-79 (PPP). Residues 83 to 103 (EWVKFCRQLFGGFSILLWIGA) traverse the membrane as a helical segment. Residues 104-126 (ILCFLAYGIQAAMEDEPSNDNLY) are Extracellular-facing. Residues 127-147 (LGVVLAAVVIVTGCFSYYQEA) form a helical membrane-spanning segment. The Cytoplasmic segment spans residues 148 to 283 (KSSKIMDSFK…VGRTPIAMEI (136 aa)). The tract at residues 207 to 228 (KVDNSSLTGESEPQTRSPEFTH) is disordered. Positions 209-224 (DNSSLTGESEPQTRSP) are enriched in polar residues. A helical transmembrane segment spans residues 284-303 (EHFIRLITGVAVFLGLSFFI). The Extracellular segment spans residues 304–315 (LSLILGYTWLEA). The helical transmembrane segment at 316 to 333 (VIFLIGIIVANVPEGLLA) threads the bilayer. At 334–766 (TVTVCLTLTA…EEGRLIFDNL (433 aa)) the chain is on the cytoplasmic side. Asp371 serves as the catalytic 4-aspartylphosphate intermediate. ATP is bound at residue Lys502. Residues Asp711 and Asp715 each contribute to the Mg(2+) site. A helical membrane pass occupies residues 767–786 (KKSIAYTLTSNIPEITPFLL). Residues 787–796 (FIIANIPLPL) lie on the Extracellular side of the membrane. A helical membrane pass occupies residues 797-817 (GTVTILCIDLGTDMVPAISLA). Residues 818 to 837 (YEAAESDIMKRQPRNPRTDK) lie on the Cytoplasmic side of the membrane. Residues 838–860 (LVNERLISMAYGQIGMIQALGGF) form a helical membrane-spanning segment. Residues 861 to 912 (FTYFVILAENGFLPARLLGVRLAWDDRSTNDLEDSYGQEWTYEQRKVVEFTC) are Extracellular-facing. The chain crosses the membrane as a helical span at residues 913–932 (HTAFFASIVVVQWADLIICK). The Cytoplasmic segment spans residues 933-945 (TRRNSVFQQGMKN). Ser937 is subject to Phosphoserine; by PKA. Residues 946–964 (KILIFGLLEETALAAFLSY) form a helical membrane-spanning segment. Residues 965–979 (CPGMGVALRMYPLKV) lie on the Extracellular side of the membrane. The chain crosses the membrane as a helical span at residues 980–1000 (TWWFCAFPYSLLIFAYDEVRK). Topologically, residues 1001–1017 (LILRRYPGGWVEKETYY) are cytoplasmic.

This sequence belongs to the cation transport ATPase (P-type) (TC 3.A.3) family. Type IIC subfamily. The sodium/potassium-transporting ATPase is composed of a catalytic alpha subunit, an auxiliary non-catalytic beta subunit and an additional regulatory subunit.

It is found in the membrane. The protein resides in the cell membrane. The enzyme catalyses K(+)(out) + Na(+)(in) + ATP + H2O = K(+)(in) + Na(+)(out) + ADP + phosphate + H(+). In terms of biological role, this is the catalytic component of the active enzyme, which catalyzes the hydrolysis of ATP coupled with the exchange of sodium and potassium ions across the plasma membrane. This action creates the electrochemical gradient of sodium and potassium ions, providing the energy for active transport of various nutrients. This Gallus gallus (Chicken) protein is Sodium/potassium-transporting ATPase subunit alpha-2 (ATP1A2).